The chain runs to 247 residues: NADH dehydrogenase [ubiquinone] flavoprotein 2, mitochondrial (247 aa).

A mitochondrion-targeting transit peptide spans 1-40 (MFRSLLKRTTFLNQLNKSNGFNRNYFKQSTLTRSDALSRH). Residues Cys135, Cys140, Cys176, and Cys180 each contribute to the [2Fe-2S] cluster site. The disordered stretch occupies residues 211-247 (NKPTKIGPQTHRKAAEGPQGKTTLLEPPVGPTCRDDL).

Belongs to the complex I 24 kDa subunit family. In terms of assembly, complex I is composed of 45 different subunits. This is a component of the flavoprotein-sulfur (FP) fragment of the enzyme. Requires [2Fe-2S] cluster as cofactor.

Its subcellular location is the mitochondrion inner membrane. The enzyme catalyses a ubiquinone + NADH + 5 H(+)(in) = a ubiquinol + NAD(+) + 4 H(+)(out). Core subunit of the mitochondrial membrane respiratory chain NADH dehydrogenase (Complex I) that is believed to belong to the minimal assembly required for catalysis. Complex I functions in the transfer of electrons from NADH to the respiratory chain. The immediate electron acceptor for the enzyme is believed to be ubiquinone. The protein is NADH dehydrogenase [ubiquinone] flavoprotein 2, mitochondrial (ndufv2) of Dictyostelium discoideum (Social amoeba).